Consider the following 188-residue polypeptide: V-type ATP synthase subunit E (188 aa).

This sequence belongs to the V-ATPase E subunit family.

Produces ATP from ADP in the presence of a proton gradient across the membrane. This Thermus thermophilus (strain ATCC BAA-163 / DSM 7039 / HB27) protein is V-type ATP synthase subunit E.